The chain runs to 456 residues: uncharacterized protein (456 aa).

A TRAM domain is found at 3–61 (TIKKNEVKTGKVIDLTHEGHGVVKVDRYPIFIPNALIDEEIKFKLIKVKKNFAIGKLIE). The [4Fe-4S] cluster site is built by cysteine 74, cysteine 80, cysteine 83, and cysteine 162. S-adenosyl-L-methionine is bound by residues glutamine 286, tyrosine 315, glutamate 336, and aspartate 384. Cysteine 411 (nucleophile) is an active-site residue.

This sequence belongs to the class I-like SAM-binding methyltransferase superfamily. RNA M5U methyltransferase family.

This is an uncharacterized protein from Staphylococcus epidermidis (strain ATCC 12228 / FDA PCI 1200).